A 221-amino-acid chain; its full sequence is Nucleolar protein 3 (221 aa).

G2 is lipidated: N-myristoyl glycine. In terms of domain architecture, CARD spans 4-95; the sequence is MQERPSETID…MPDPAWDWQH (92 aa). Positions 20–70 are essential for interaction with BAX; it reads VETLQADSGLLLDALVARGVLTGPEYEALDALPDAERRVRRLLLLVQSKGE. The interval 107-221 is disordered; that stretch reads PPCPGHWTPE…GDESEGCENT (115 aa). Positions 132–143 are enriched in acidic residues; sequence EEEEIGGPEDSE. T149 is subject to Phosphothreonine; by CK2. Composition is skewed to acidic residues over residues 165–201 and 209–221; these read PDLE…EPEP and FQEG…CENT.

As to quaternary structure, oligomerizes (via CARD doamin). Interacts (via CARD domain) with CASP2; inhibits CASP2 activity in a phosphorylation-dependent manner. Interacts with CASP8; decreases CASP8 activity in a mitochondria localization- and phosphorylation-dependent manner and this interaction is dissociated by calcium. Interacts with TFPT; translocates NOL3 into the nucleus and negatively regulated TFPT-induced cell death. Interacts directly (via CARD domain) with FAS and FADD (via DED domain); inhibits death-inducing signaling complex (DISC) assembly by inhibiting the increase in FAS-FADD binding induced by FAS activation. Interacts (via CARD domain) with BAX (via a C-terminal 33 residues); inhibits BAX activation and translocation and consequently cytochrome c release from mitochondria. Interacts with PPM1G; may dephosphorylate NOL3. Interacts (via CARD domain) with BBC3 (via BH3 domain); preventing the association of BBC3 with BCL2 and resulting in activation of CASP8. Interacts (via CARD domain) with BAD(via BH3 domain); preventing the association of BAD with BCL2. Interacts directly (via CARD domain) with TNFRSF1A; inhibits TNF-signaling pathway. Post-translationally, phosphorylation at Thr-149 is required for its antiapoptotic effect by blocking death-inducing signaling complex (DISC) activity through the control of interaction with CASP8. Phosphorylation at Thr-149 results in translocation to mitochondria and this translocation enables the binding to CASP8. Dephosphorylated at Thr-149 by calcineurin; doesn't inhibit the association between FADD and CASP8 and the consequent apoptosis. Polyubiquitinated by MDM2; promoting proteasomal-dependent degradation in response to apoptotic stimuli. Highly expressed in skeletal muscle, heart and medulla.

It localises to the cytoplasm. Its subcellular location is the mitochondrion. It is found in the sarcoplasmic reticulum. The protein localises to the membrane. Its function is as follows. Apoptosis repressor that blocks multiple modes of cell death. Inhibits extrinsic apoptotic pathways through two different ways. Firstly by interacting with FAS and FADD upon FAS activation blocking death-inducing signaling complex (DISC) assembly. Secondly by interacting with CASP8 in a mitochondria localization- and phosphorylation-dependent manner, limiting the amount of soluble CASP8 available for DISC-mediated activation. Inhibits intrinsic apoptotic pathway in response to a wide range of stresses, through its interaction with BAX resulting in BAX inactivation, preventing mitochondrial dysfunction and release of pro-apoptotic factors. Inhibits calcium-mediated cell death by functioning as a cytosolic calcium buffer, dissociating its interaction with CASP8 and maintaining calcium homeostasis. Negatively regulates oxidative stress-induced apoptosis by phosphorylation-dependent suppression of the mitochondria-mediated intrinsic pathway, by blocking CASP2 activation and BAX translocation. Negatively regulates hypoxia-induced apoptosis in part by inhibiting the release of cytochrome c from mitochondria in a caspase-independent manner. Also inhibits TNF-induced necrosis by preventing TNF-signaling pathway through TNFRSF1A interaction abrogating the recruitment of RIPK1 to complex I. Finally through its role as apoptosis repressor, promotes vascular remodeling through inhibition of apoptosis and stimulation of proliferation, in response to hypoxia. Inhibits too myoblast differentiation through caspase inhibition. This Rattus norvegicus (Rat) protein is Nucleolar protein 3 (Nol3).